The following is a 179-amino-acid chain: Large ribosomal subunit protein uL6 (179 aa).

Belongs to the universal ribosomal protein uL6 family. As to quaternary structure, part of the 50S ribosomal subunit.

Functionally, this protein binds to the 23S rRNA, and is important in its secondary structure. It is located near the subunit interface in the base of the L7/L12 stalk, and near the tRNA binding site of the peptidyltransferase center. In Finegoldia magna (strain ATCC 29328 / DSM 20472 / WAL 2508) (Peptostreptococcus magnus), this protein is Large ribosomal subunit protein uL6.